The sequence spans 465 residues: UDP-N-acetylmuramate--L-alanine ligase (465 aa).

112 to 118 (GTHGKTT) contributes to the ATP binding site.

The protein belongs to the MurCDEF family.

The protein localises to the cytoplasm. It catalyses the reaction UDP-N-acetyl-alpha-D-muramate + L-alanine + ATP = UDP-N-acetyl-alpha-D-muramoyl-L-alanine + ADP + phosphate + H(+). Its pathway is cell wall biogenesis; peptidoglycan biosynthesis. Its function is as follows. Cell wall formation. This is UDP-N-acetylmuramate--L-alanine ligase from Burkholderia orbicola (strain MC0-3).